A 432-amino-acid polypeptide reads, in one-letter code: D-amino acid dehydrogenase (432 aa).

FAD is bound at residue Val-3–Trp-17.

The protein belongs to the DadA oxidoreductase family. FAD serves as cofactor.

The enzyme catalyses a D-alpha-amino acid + A + H2O = a 2-oxocarboxylate + AH2 + NH4(+). It functions in the pathway amino-acid degradation; D-alanine degradation; NH(3) and pyruvate from D-alanine: step 1/1. Oxidative deamination of D-amino acids. The protein is D-amino acid dehydrogenase of Klebsiella pneumoniae (strain 342).